Reading from the N-terminus, the 138-residue chain is Endoribonuclease YbeY (138 aa).

Residues histidine 105, histidine 109, and aspartate 115 each coordinate Zn(2+).

It belongs to the endoribonuclease YbeY family. Zn(2+) serves as cofactor.

The protein localises to the cytoplasm. Its function is as follows. Single strand-specific metallo-endoribonuclease involved in late-stage 70S ribosome quality control and in maturation of the 3' terminus of the 16S rRNA. The chain is Endoribonuclease YbeY from Chlorobium phaeobacteroides (strain BS1).